A 203-amino-acid polypeptide reads, in one-letter code: LexA repressor 2 (203 aa).

Positions 28–48 form a DNA-binding region, H-T-H motif; sequence MREIARHLNVNGTLGVAKHLE. Catalysis depends on for autocatalytic cleavage activity residues Ser122 and Lys159.

The protein belongs to the peptidase S24 family. In terms of assembly, homodimer.

The enzyme catalyses Hydrolysis of Ala-|-Gly bond in repressor LexA.. Represses a number of genes involved in the response to DNA damage (SOS response), including recA and lexA. In the presence of single-stranded DNA, RecA interacts with LexA causing an autocatalytic cleavage which disrupts the DNA-binding part of LexA, leading to derepression of the SOS regulon and eventually DNA repair. This is LexA repressor 2 from Geobacter sulfurreducens (strain ATCC 51573 / DSM 12127 / PCA).